Reading from the N-terminus, the 214-residue chain is Urease accessory protein UreF (214 aa).

It belongs to the UreF family. As to quaternary structure, ureD, UreF and UreG form a complex that acts as a GTP-hydrolysis-dependent molecular chaperone, activating the urease apoprotein by helping to assemble the nickel containing metallocenter of UreC. The UreE protein probably delivers the nickel.

It is found in the cytoplasm. Its function is as follows. Required for maturation of urease via the functional incorporation of the urease nickel metallocenter. The protein is Urease accessory protein UreF of Ruegeria sp. (strain TM1040) (Silicibacter sp.).